Reading from the N-terminus, the 254-residue chain is MERKSYVFGNWKMHKTAEEAKDFLSVFCPFVKEISPASIVGIAPSFTTLSACCESIKKMDSSIWLGAQNVHQDSSGAFTGEVSLPMLQEFHVNFVLLGHSECRHIFHEEDSTIALKVGAAARSGVVPVLCIGETLETRESGTTKDVLSNQLILGLAQLPETASVIIAYEPVWAIGTGKVASTADVQEVHAFCREVLSRIFSKEKSETISILYGGSVKADNAEGFARCPDVDGLLVGGASLDPQVFANVVGNFNL.

Position 10-12 (10-12 (NWK)) interacts with substrate. His99 (electrophile) is an active-site residue. Catalysis depends on Glu169, which acts as the Proton acceptor. Residues Gly175, Ser215, and 236 to 237 (GG) each bind substrate.

This sequence belongs to the triosephosphate isomerase family. In terms of assembly, homodimer.

The protein localises to the cytoplasm. It catalyses the reaction D-glyceraldehyde 3-phosphate = dihydroxyacetone phosphate. The protein operates within carbohydrate biosynthesis; gluconeogenesis. It participates in carbohydrate degradation; glycolysis; D-glyceraldehyde 3-phosphate from glycerone phosphate: step 1/1. Its function is as follows. Involved in the gluconeogenesis. Catalyzes stereospecifically the conversion of dihydroxyacetone phosphate (DHAP) to D-glyceraldehyde-3-phosphate (G3P). The sequence is that of Triosephosphate isomerase from Chlamydia felis (strain Fe/C-56) (Chlamydophila felis).